Reading from the N-terminus, the 732-residue chain is Translation initiation factor IF-2 (732 aa).

The disordered stretch occupies residues 40–147 (PEVVEKLDHT…QQEQPMKKEK (108 aa)). The segment covering 42-67 (VVEKLDHTYNKKNERPQASAPKEKQK) has biased composition (basic and acidic residues). Positions 90–103 (KVPKKKSANKKKEG) are enriched in basic residues. Residues 104-117 (KKHDLQLQQQEKKI) show a composition bias toward basic and acidic residues. A compositionally biased stretch (basic residues) spans 118 to 129 (FHQQKKKIKGKA). Positions 233–402 (ERPPVVTIMG…LLVSEMEELK (170 aa)) constitute a tr-type G domain. Residues 242–249 (GHVDHGKT) are G1. GTP is bound at residue 242 to 249 (GHVDHGKT). Residues 267-271 (GITQH) are G2. The tract at residues 288–291 (DTPG) is G3. Residues 288-292 (DTPGH) and 342-345 (NKMD) contribute to the GTP site. The segment at 342–345 (NKMD) is G4. Residues 378–380 (SAK) are G5.

The protein belongs to the TRAFAC class translation factor GTPase superfamily. Classic translation factor GTPase family. IF-2 subfamily.

The protein resides in the cytoplasm. Its function is as follows. One of the essential components for the initiation of protein synthesis. Protects formylmethionyl-tRNA from spontaneous hydrolysis and promotes its binding to the 30S ribosomal subunits. Also involved in the hydrolysis of GTP during the formation of the 70S ribosomal complex. In Geobacillus sp. (strain WCH70), this protein is Translation initiation factor IF-2.